The following is a 238-amino-acid chain: Ribonuclease PH (238 aa).

Phosphate is bound by residues R86 and 124-126 (GTR).

The protein belongs to the RNase PH family. Homohexameric ring arranged as a trimer of dimers.

It carries out the reaction tRNA(n+1) + phosphate = tRNA(n) + a ribonucleoside 5'-diphosphate. In terms of biological role, phosphorolytic 3'-5' exoribonuclease that plays an important role in tRNA 3'-end maturation. Removes nucleotide residues following the 3'-CCA terminus of tRNAs; can also add nucleotides to the ends of RNA molecules by using nucleoside diphosphates as substrates, but this may not be physiologically important. Probably plays a role in initiation of 16S rRNA degradation (leading to ribosome degradation) during starvation. The polypeptide is Ribonuclease PH (Trichlorobacter lovleyi (strain ATCC BAA-1151 / DSM 17278 / SZ) (Geobacter lovleyi)).